The primary structure comprises 256 residues: Small ribosomal subunit protein eS1 (256 aa).

Position 2 is an N-acetylalanine; partial (A2).

This sequence belongs to the eukaryotic ribosomal protein eS1 family. In terms of assembly, component of the small ribosomal subunit. Mature ribosomes consist of a small (40S) and a large (60S) subunit. The 40S subunit contains about 33 different proteins and 1 molecule of RNA (18S). The 60S subunit contains about 49 different proteins and 3 molecules of RNA (25S, 5.8S and 5S).

It is found in the cytoplasm. In Postia placenta (strain ATCC 44394 / Madison 698-R) (Brown rot fungus), this protein is Small ribosomal subunit protein eS1.